The following is a 191-amino-acid chain: Syndecan-2-A (191 aa).

Residues M1 to A22 form the signal peptide. At Q23–A137 the chain is on the extracellular side. Residues S32 to D60 are disordered. Residues S36, S48, S50, and S52 are each glycosylated (O-linked (Xyl...) (glycosaminoglycan) serine). A helical membrane pass occupies residues A138 to V158. The Cytoplasmic segment spans residues Y159–A191. Residues S168–A191 form a disordered region.

The protein belongs to the syndecan proteoglycan family. O-glycosylated; contains both heparan sulfate and chondroitin sulfate.

The protein localises to the membrane. Functionally, cell surface proteoglycan. This Xenopus laevis (African clawed frog) protein is Syndecan-2-A (sdc2-a).